The chain runs to 907 residues: Epidermal growth factor receptor substrate 15-like 1 (907 aa).

Residue Ala-2 is modified to N-acetylalanine. In terms of domain architecture, EH 1 spans 15 to 104; sequence GNPLYESYYK…SLTMPPPKFH (90 aa). The interval 15–368 is interaction with DAB2; the sequence is GNPLYESYYK…PSERGTPIPD (354 aa). An EF-hand 1 domain is found at 48-83; sequence LSDIILGKIWDLADPEGKGFLDKQGFYVALRLVACA. Tyr-74 carries the post-translational modification Phosphotyrosine. Residues Ser-107 and Ser-108 each carry the phosphoserine modification. The region spanning 127–215 is the EH 2 domain; that stretch reads EKAKFDGIFE…PPLIPPSKRK (89 aa). The region spanning 159–194 is the EF-hand 2 domain; that stretch reads LPLDVLGRVWDLSDIDKDGHLDRDEFAVAMHLVYRA. Ca(2+) is bound by residues Asp-172, Asp-174, Asp-176, His-178, and Glu-183. 5 positions are modified to phosphoserine: Ser-229, Ser-244, Ser-253, Ser-255, and Ser-259. The segment at 229–260 is disordered; sequence SPPPKDSLRSTPSHGSVSSLNSTGSLSPKHSV. Residues 241–255 are compositionally biased toward low complexity; that stretch reads SHGSVSSLNSTGSLS. EF-hand domains follow at residues 272–307 and 308–341; these read ADKM…SGLT and QNLL…IQQK. Residues 273–363 enclose the EH 3 domain; that stretch reads DKMRFDEIFL…PDMVPPSERG (91 aa). Ser-360 is subject to Phosphoserine. Phosphothreonine is present on Thr-364. Ser-369 and Ser-375 each carry phosphoserine. Positions 384-551 form a coiled coil; it reads LDDISQEIAQ…RSKLSQLQES (168 aa). Ser-558 bears the Phosphoserine mark. Phosphotyrosine is present on Tyr-562. Ser-610 is subject to Phosphoserine. A disordered region spans residues 611 to 860; sequence QELHPDPFQA…SSSGFADFTS (250 aa). Residues 622–636 show a composition bias toward basic and acidic residues; the sequence is DPFKSDPFKGADPFK. Positions 643–652 are enriched in polar residues; it reads DPFSEQQTAA. Phosphoserine occurs at positions 664, 670, 695, 715, and 732. The span at 682 to 696 shows a compositional bias: polar residues; sequence NDPFTSDPFTKNPSL. A compositionally biased stretch (low complexity) spans 703 to 743; it reads FESSDPFSSSSISSKGSDPFGTLDPFGSSSFSSAEGFADFS. Pro residues predominate over residues 776–790; it reads ALPPKKPAPPRPKPP. Ser-791 is subject to Phosphoserine. Polar residues predominate over residues 791-802; that stretch reads SGQSTPVSQLGS. Thr-795 is modified (phosphothreonine). Residues 840–853 are compositionally biased toward low complexity; the sequence is APSSSAKPPKTSSS. 2 UIM domains span residues 863 to 882 and 889 to 907; these read NEEQ…EQER and QEQE…DMPA.

As to quaternary structure, interacts with EPS15, AGFG1/HRB and AGFG2/HRBL. Associates with the clathrin-associated adapter protein complex 2 (AP-2). Interacts with FCHO1. Interacts with FCHO2. Interacts (via EH domains) with DAB2. Interacts with UBQLN1 (via ubiquitin-like domain). Interacts with CAVIN3 (via leucine-zipper domain). Interacts with REPS2. Post-translationally, phosphorylated on tyrosine residues by EGFR.

The protein resides in the cell membrane. The protein localises to the nucleus. It is found in the membrane. Its subcellular location is the coated pit. Functionally, seems to be a constitutive component of clathrin-coated pits that is required for receptor-mediated endocytosis. Involved in endocytosis of integrin beta-1 (ITGB1) and transferrin receptor (TFR); internalization of ITGB1 as DAB2-dependent cargo but not TFR seems to require association with DAB2. The chain is Epidermal growth factor receptor substrate 15-like 1 (Eps15l1) from Mus musculus (Mouse).